Consider the following 501-residue polypeptide: Glucose-6-phosphate exchanger SLC37A2 (501 aa).

A helical transmembrane segment spans residues 19 to 39 (SWFRGFILLLTFLIYACYHMS). N-linked (GlcNAc...) asparagine glycans are attached at residues Asn-53, Asn-62, and Asn-68. A run of 5 helical transmembrane segments spans residues 88–108 (GAVD…SGIF), 118–140 (LSAG…FWNI), 142–164 (MLWY…WPSV), 179–199 (FIMG…SLIA), and 210–230 (SFIV…LFLI). A compositionally biased stretch (basic and acidic residues) spans 240-252 (PPRHHDDPEKEQD). The tract at residues 240–266 (PPRHHDDPEKEQDNPEDPVNSPYSSRE) is disordered. 6 helical membrane-spanning segments follow: residues 303–323 (CLLF…LYIF), 334–354 (GDLS…AGLI), 362–382 (ATTC…YNYI), 391–411 (IVML…ITTA), 434–454 (AIID…AGLI), and 462–482 (VFYM…RLVY).

It belongs to the major facilitator superfamily. Organophosphate:Pi antiporter (OPA) (TC 2.A.1.4) family. In terms of tissue distribution, highly expressed in bone marrow derived macrophages, and weakly in spleen.

It localises to the endoplasmic reticulum membrane. It catalyses the reaction D-glucose 6-phosphate(in) + phosphate(out) = D-glucose 6-phosphate(out) + phosphate(in). Inhibited by vanadate but not by chlorogenic acid. Functionally, inorganic phosphate and glucose-6-phosphate antiporter. May transport cytoplasmic glucose-6-phosphate into the lumen of the endoplasmic reticulum and translocate inorganic phosphate into the opposite direction. Independent of a lumenal glucose-6-phosphatase. May not play a role in homeostatic regulation of blood glucose levels. This chain is Glucose-6-phosphate exchanger SLC37A2, found in Mus musculus (Mouse).